Here is a 653-residue protein sequence, read N- to C-terminus: Potassium voltage-gated channel subfamily A member 4 (653 aa).

Residues 1–304 (MEVAMVSAES…LLFEYPESSS (304 aa)) lie on the Cytoplasmic side of the membrane. Residues 24–148 (QARARERERL…RFYYSEDDHG (125 aa)) form a disordered region. The segment covering 36–52 (SRAAAAAAVAAATAAVE) has biased composition (low complexity). Positions 81-97 (GSRRRRRQRSEKKKAHY) are enriched in basic residues. Ser-90 bears the Phosphoserine; by PKA mark. Ser-122 carries the post-translational modification Phosphoserine. The segment covering 122–137 (SEEEEDEEEEEEEEEE) has biased composition (acidic residues). A helical membrane pass occupies residues 305–326 (PARGIAIVSVLVILISIVIFCL). Over 327 to 370 (ETLPEFRDDRDLVMALSAGGHGGLLNDTSAPHLENSGHTIFNDP) the chain is Extracellular. A glycan (N-linked (GlcNAc...) asparagine) is linked at Asn-352. Residues 371–392 (FFIVETVCIVWFSFEFVVRCFA) form a helical membrane-spanning segment. The Cytoplasmic portion of the chain corresponds to 393 to 403 (CPSQALFFKNI). Residues 404–424 (MNIIDIVSILPYFITLGTDLA) form a helical membrane-spanning segment. The Extracellular segment spans residues 425-439 (QQQGGGNGQQQQAMS). Residues 440–460 (FAILRIIRLVRVFRIFKLSRH) traverse the membrane as a helical; Voltage-sensor segment. At 461-475 (SKGLQILGHTLRASM) the chain is on the cytoplasmic side. An S4-S5 linker region spans residues 462–475 (KGLQILGHTLRASM). Residues 476 to 497 (RELGLLIFFLFIGVILFSSAVY) form a helical membrane-spanning segment. Residues 498-511 (FAEADEPTTHFQSI) lie on the Extracellular side of the membrane. The helical intramembrane region spans 512–523 (PDAFWWAVVTMT). Residues 524-529 (TVGYGD) carry the Selectivity filter motif. Residues 524 to 531 (TVGYGDMK) lie within the membrane without spanning it. The Extracellular segment spans residues 532 to 538 (PITVGGK). Residues 539–567 (IVGSLCAIAGVLTIALPVPVIVSNFNYFY) form a helical membrane-spanning segment. The Cytoplasmic segment spans residues 568-653 (HRETENEEQT…SNAKAVETDV (86 aa)). Ser-599 carries the phosphoserine; by PKA modification. A compositionally biased stretch (basic and acidic residues) spans 629–640 (CQGKGDDSETDK). The segment at 629–653 (CQGKGDDSETDKNNCSNAKAVETDV) is disordered. Positions 651–653 (TDV) match the PDZ-binding motif.

This sequence belongs to the potassium channel family. A (Shaker) (TC 1.A.1.2) subfamily. Kv1.4/KCNA4 sub-subfamily. As to quaternary structure, homotetramer and heterotetramer of potassium channel proteins. Interacts with KCNAB1 and KCNAB2. Interacts with DLG1, DLG2 and DLG4 via their PDZ domains. Interacts with SIGMAR1. Detected in a complex with KCNA1. Interacts with KCNA2. Part of a complex containing KCNA1, KCNAB1 and LGI1. Interacts (via cytoplasmic N-terminal domain) with KCNRG. As to expression, expressed in brain, and at lower levels in the testis, lung, kidney, colon and heart. Detected in heart ventricle.

It is found in the cell membrane. It localises to the cell projection. The protein localises to the axon. The enzyme catalyses K(+)(in) = K(+)(out). With respect to regulation, inhibited by 4-aminopyridine (4-AP), but not by tetraethylammonium (TEA) and charybdotoxin (CTX). In terms of biological role, voltage-gated potassium channel that mediates transmembrane potassium transport in excitable membranes. Forms tetrameric potassium-selective channels through which potassium ions pass in accordance with their electrochemical gradient. The channel alternates between opened and closed conformations in response to the voltage difference across the membrane. Can form functional homotetrameric channels and heterotetrameric channels that contain variable proportions of KCNA1, KCNA2, KCNA4, KCNA5, and possibly other family members as well; channel properties depend on the type of alpha subunits that are part of the channel. Channel properties are modulated by cytoplasmic beta subunits that regulate the subcellular location of the alpha subunits and promote rapid inactivation. In vivo, membranes probably contain a mixture of heteromeric potassium channel complexes, making it difficult to assign currents observed in intact tissues to any particular potassium channel family member. Homotetrameric KCNA4 forms a potassium channel that opens in response to membrane depolarization, followed by rapid spontaneous channel closure. Likewise, a heterotetrameric channel formed by KCNA1 and KCNA4 shows rapid inactivation. This is Potassium voltage-gated channel subfamily A member 4 (KCNA4) from Homo sapiens (Human).